Consider the following 83-residue polypeptide: Small ribosomal subunit protein bS16 (83 aa).

Belongs to the bacterial ribosomal protein bS16 family.

The sequence is that of Small ribosomal subunit protein bS16 from Azoarcus sp. (strain BH72).